The primary structure comprises 358 residues: Peptide chain release factor 1 (358 aa).

Gln-233 carries the N5-methylglutamine modification.

The protein belongs to the prokaryotic/mitochondrial release factor family. In terms of processing, methylated by PrmC. Methylation increases the termination efficiency of RF1.

The protein resides in the cytoplasm. Functionally, peptide chain release factor 1 directs the termination of translation in response to the peptide chain termination codons UAG and UAA. The chain is Peptide chain release factor 1 from Lachnoclostridium phytofermentans (strain ATCC 700394 / DSM 18823 / ISDg) (Clostridium phytofermentans).